Reading from the N-terminus, the 181-residue chain is uncharacterized protein (181 aa).

This is an uncharacterized protein from Acidianus filamentous virus 2 (isolate Italy/Pozzuoli) (AFV-2).